Consider the following 500-residue polypeptide: UDP-N-acetylmuramoyl-L-alanyl-D-glutamate--2,6-diaminopimelate ligase (500 aa).

Ser-38 provides a ligand contact to UDP-N-acetyl-alpha-D-muramoyl-L-alanyl-D-glutamate. 118–124 (GTNGKTS) is an ATP binding site. Residues 160–161 (TT), Ser-187, and Arg-195 contribute to the UDP-N-acetyl-alpha-D-muramoyl-L-alanyl-D-glutamate site. N6-carboxylysine is present on Lys-227. Meso-2,6-diaminopimelate-binding positions include Arg-395, 419–422 (DNPR), Gly-471, and Glu-475. The Meso-diaminopimelate recognition motif motif lies at 419–422 (DNPR).

The protein belongs to the MurCDEF family. MurE subfamily. Requires Mg(2+) as cofactor. In terms of processing, carboxylation is probably crucial for Mg(2+) binding and, consequently, for the gamma-phosphate positioning of ATP.

It is found in the cytoplasm. It carries out the reaction UDP-N-acetyl-alpha-D-muramoyl-L-alanyl-D-glutamate + meso-2,6-diaminopimelate + ATP = UDP-N-acetyl-alpha-D-muramoyl-L-alanyl-gamma-D-glutamyl-meso-2,6-diaminopimelate + ADP + phosphate + H(+). The protein operates within cell wall biogenesis; peptidoglycan biosynthesis. Catalyzes the addition of meso-diaminopimelic acid to the nucleotide precursor UDP-N-acetylmuramoyl-L-alanyl-D-glutamate (UMAG) in the biosynthesis of bacterial cell-wall peptidoglycan. In Leptospira borgpetersenii serovar Hardjo-bovis (strain L550), this protein is UDP-N-acetylmuramoyl-L-alanyl-D-glutamate--2,6-diaminopimelate ligase.